An 85-amino-acid polypeptide reads, in one-letter code: Homeobox protein liguleless 3 (85 aa).

Positions 1–21 (ELKEMLLKKYSGCLSRLRSEF) constitute an ELK domain. Residues 22 to 85 (LKKRKKGKLP…NQRKRHWKPS (64 aa)) constitute a DNA-binding region (homeobox; TALE-type).

Belongs to the TALE/KNOX homeobox family.

It is found in the nucleus. Functionally, probably binds to the DNA sequence 5'-TGAC-3'. The polypeptide is Homeobox protein liguleless 3 (LG3) (Zea mays (Maize)).